The primary structure comprises 599 residues: Cytochrome P450 monooxygenase ALT8 (599 aa).

2 consecutive transmembrane segments (helical) span residues 4–21 and 36–56; these read LACVGAAAMACALAVYLG and ILFGCSGLWYVWKGLLWPAYF. N-linked (GlcNAc...) asparagine glycosylation is present at asparagine 127. Over residues 495 to 504 the composition is skewed to low complexity; sequence DDSSAASPSF. Residues 495-522 form a disordered region; the sequence is DDSSAASPSFGGSGKRKSQYTDTHKEPS. Cysteine 539 is a heme binding site.

This sequence belongs to the cytochrome P450 family. Heme is required as a cofactor.

The protein localises to the membrane. It functions in the pathway secondary metabolite biosynthesis. Cytochrome P450 monooxygenase; part of the gene cluster that mediates the biosynthesis of the host-selective toxins (HSTs) AAL-toxins, sphinganine-analog mycotoxins responsible for Alternaria stem canker on tomato by the tomato pathotype. The biosynthesis starts with the polyketide synthase ALT1-catalyzed C-16 carbon chain assembly from one starter acetyl-CoA unit with malonyl-CoA extender units. ALT1 also selectively transfers methyl groups at the first and the third cycle of chain elongation for AAL toxin. The C-16 polyketide chain is released from the enzyme by a nucleophilic attack of a carbanion, which is derived from R-carbon of glycin by decarboxylation, on the carbonyl carbon of polyketide acyl chain. This step is probably catalyzed by a pyridoxal 5'-phosphate-dependent aminoacyl transferase ALT4. The respective functions of the other enzymes encoded by the cluster have still to be elucidated. The sphingosine N-acyltransferase-like protein ALT7 seems not to act as a resistance/self-tolerance factor against the toxin in the toxin biosynthetic gene cluster, contrary to what is expected. The sequence is that of Cytochrome P450 monooxygenase ALT8 from Alternaria alternata (Alternaria rot fungus).